A 257-amino-acid polypeptide reads, in one-letter code: NAD-capped RNA hydrolase NudC (257 aa).

The substrate site is built by K25 and R69. The Zn(2+) site is built by C98 and C101. E111 is a substrate binding site. Residues C116 and C119 each coordinate Zn(2+). Y124 is a substrate binding site. A Nudix hydrolase domain is found at P125–T248. Positions 158, 174, and 178 each coordinate a divalent metal cation. The short motif at G159–G180 is the Nudix box element. Q192–S199 serves as a coordination point for substrate. E219 contributes to the a divalent metal cation binding site. A241 is a binding site for substrate.

It belongs to the Nudix hydrolase family. NudC subfamily. As to quaternary structure, homodimer. The cofactor is Mg(2+). Requires Mn(2+) as cofactor. Zn(2+) is required as a cofactor.

The catalysed reaction is a 5'-end NAD(+)-phospho-ribonucleoside in mRNA + H2O = a 5'-end phospho-adenosine-phospho-ribonucleoside in mRNA + beta-nicotinamide D-ribonucleotide + 2 H(+). It carries out the reaction NAD(+) + H2O = beta-nicotinamide D-ribonucleotide + AMP + 2 H(+). The enzyme catalyses NADH + H2O = reduced beta-nicotinamide D-ribonucleotide + AMP + 2 H(+). Functionally, mRNA decapping enzyme that specifically removes the nicotinamide adenine dinucleotide (NAD) cap from a subset of mRNAs by hydrolyzing the diphosphate linkage to produce nicotinamide mononucleotide (NMN) and 5' monophosphate mRNA. The NAD-cap is present at the 5'-end of some mRNAs and stabilizes RNA against 5'-processing. Has preference for mRNAs with a 5'-end purine. Catalyzes the hydrolysis of a broad range of dinucleotide pyrophosphates. This Escherichia coli O157:H7 protein is NAD-capped RNA hydrolase NudC.